A 101-amino-acid polypeptide reads, in one-letter code: Small ribosomal subunit protein bS6 (101 aa).

Belongs to the bacterial ribosomal protein bS6 family.

Its function is as follows. Binds together with bS18 to 16S ribosomal RNA. This Micrococcus luteus (strain ATCC 4698 / DSM 20030 / JCM 1464 / CCM 169 / CCUG 5858 / IAM 1056 / NBRC 3333 / NCIMB 9278 / NCTC 2665 / VKM Ac-2230) (Micrococcus lysodeikticus) protein is Small ribosomal subunit protein bS6.